The primary structure comprises 103 residues: MAKKSLIQREKKRHKLEQKYHLIRRSSKKKIRSKVSPLSLSEKTKMQEKLQSLPRNSAPTRLHRRCFLTGRPRANYRDFGLSGHILREMVYACLLPGATRSSW.

Positions 26–56 (SSKKKIRSKVSPLSLSEKTKMQEKLQSLPRN) are disordered.

Belongs to the universal ribosomal protein uS14 family. Part of the 30S ribosomal subunit.

It localises to the plastid. The protein localises to the chloroplast. In terms of biological role, binds 16S rRNA, required for the assembly of 30S particles. The polypeptide is Small ribosomal subunit protein uS14c (Saccharum officinarum (Sugarcane)).